We begin with the raw amino-acid sequence, 407 residues long: Phosphopentomutase (407 aa).

Asp-10, Asp-306, His-311, Asp-347, His-348, and His-359 together coordinate Mn(2+).

The protein belongs to the phosphopentomutase family. It depends on Mn(2+) as a cofactor.

The protein localises to the cytoplasm. The catalysed reaction is 2-deoxy-alpha-D-ribose 1-phosphate = 2-deoxy-D-ribose 5-phosphate. It carries out the reaction alpha-D-ribose 1-phosphate = D-ribose 5-phosphate. It participates in carbohydrate degradation; 2-deoxy-D-ribose 1-phosphate degradation; D-glyceraldehyde 3-phosphate and acetaldehyde from 2-deoxy-alpha-D-ribose 1-phosphate: step 1/2. In terms of biological role, isomerase that catalyzes the conversion of deoxy-ribose 1-phosphate (dRib-1-P) and ribose 1-phosphate (Rib-1-P) to deoxy-ribose 5-phosphate (dRib-5-P) and ribose 5-phosphate (Rib-5-P), respectively. In Salmonella arizonae (strain ATCC BAA-731 / CDC346-86 / RSK2980), this protein is Phosphopentomutase.